A 320-amino-acid chain; its full sequence is GDSL esterase/lipase At3g43570 (320 aa).

Positions methionine 1–alanine 19 are cleaved as a signal peptide. The N-linked (GlcNAc...) asparagine glycan is linked to asparagine 25. Residue serine 37 is the Nucleophile of the active site. N-linked (GlcNAc...) asparagine glycosylation is present at asparagine 287. Active-site residues include aspartate 295 and histidine 298.

Belongs to the 'GDSL' lipolytic enzyme family.

It localises to the secreted. The sequence is that of GDSL esterase/lipase At3g43570 from Arabidopsis thaliana (Mouse-ear cress).